We begin with the raw amino-acid sequence, 615 residues long: 9-cis-epoxycarotenoid dioxygenase NCED1, chloroplastic (615 aa).

The N-terminal 41 residues, 1 to 41, are a transit peptide targeting the chloroplast; it reads MPSPASNTWINTTLPSSCSSPFKDLASTSSSPTTLLPFKKR. Disordered stretches follow at residues 20 to 45 and 62 to 101; these read SPFK…SSSN and YQPT…KQPF. Low complexity-rich tracts occupy residues 27 to 37 and 64 to 86; these read STSSSPTTLLP and PTST…TTTT. The Fe cation site is built by His316, His365, and His430. Positions 571-592 form a coiled coil; it reads KEWKSELQIVNAQNLKLEASIK. A Fe cation-binding site is contributed by His602.

This sequence belongs to the carotenoid oxygenase family. The cofactor is Fe(2+).

It localises to the plastid. It is found in the chloroplast thylakoid membrane. The enzyme catalyses a 9-cis-epoxycarotenoid + O2 = a 12'-apo-carotenal + 2-cis,4-trans-xanthoxin. It catalyses the reaction 9-cis-violaxanthin + O2 = (3S,5R,6S)-5,6-epoxy-3-hydroxy-5,6-dihydro-12'-apo-beta-caroten-12'-al + 2-cis,4-trans-xanthoxin. It carries out the reaction 9'-cis-neoxanthin + O2 = (3S,5R,6R)-3,5-dihydroxy-6,7-didehydro-5,6-dihydro-12'-apo-beta-caroten-12'-al + 2-cis,4-trans-xanthoxin. Has a 11,12(11',12') 9-cis epoxycarotenoid cleavage activity. Catalyzes the first step of abscisic-acid biosynthesis from carotenoids, in response to water stress. Active on 9-cis-violaxanthin and 9'-cis-neoxanthin, but not on the all-trans isomers of violaxanthin and neoxanthin. This Phaseolus vulgaris (Kidney bean) protein is 9-cis-epoxycarotenoid dioxygenase NCED1, chloroplastic (NCED1).